Here is a 253-residue protein sequence, read N- to C-terminus: 5-oxoprolinase subunit A (253 aa).

It belongs to the LamB/PxpA family. Forms a complex composed of PxpA, PxpB and PxpC.

The enzyme catalyses 5-oxo-L-proline + ATP + 2 H2O = L-glutamate + ADP + phosphate + H(+). Catalyzes the cleavage of 5-oxoproline to form L-glutamate coupled to the hydrolysis of ATP to ADP and inorganic phosphate. This is 5-oxoprolinase subunit A from Ruegeria pomeroyi (strain ATCC 700808 / DSM 15171 / DSS-3) (Silicibacter pomeroyi).